The chain runs to 505 residues: Trans-cinnamate 4-monooxygenase (505 aa).

A helical membrane pass occupies residues 3–23 (LLLLEKTLLGLFAAIIVASIV). (E)-cinnamate-binding positions include 213–218 (RSRLAQ) and Ala-306. Heme is bound at residue Cys-447.

It belongs to the cytochrome P450 family. The cofactor is heme.

It is found in the membrane. The catalysed reaction is (E)-cinnamate + reduced [NADPH--hemoprotein reductase] + O2 = (E)-4-coumarate + oxidized [NADPH--hemoprotein reductase] + H2O + H(+). It functions in the pathway phenylpropanoid metabolism; trans-4-coumarate biosynthesis; trans-4-coumarate from trans-cinnamate: step 1/1. In terms of biological role, catalyzes the first oxidative step of the phenylpropanoid pathway in higher plants by transforming trans-cinnamate into p-coumarate. The compounds formed by this pathway are essential components for lignification, pollination, and defense against ultraviolet light, predators and pathogens. In Catharanthus roseus (Madagascar periwinkle), this protein is Trans-cinnamate 4-monooxygenase (CYP73A4).